Reading from the N-terminus, the 376-residue chain is MTSDVLQLTCDLIARASVTPADAGCQALIADRLSAAGFACEHLRLGAVDNLWATHGSGAPVLVLLGHTDVVPPGPASDWASDPFAPQVRDGVLYGRGAADMKGSVAAFVVAAEQFVAAHPEHPGTLAVLLTSDEEGDAIDGVRHVARLFAERGQQIDWCITGEPSSTERLGDLLRVGRRGSLSGNLIVKGVQGHVAYPHKARNPIHLAAPALAELIARQWDDGFESFPPTSLQISNIHAGTGANNVIPGELQVAFNLRYTPHWNAETLEREIVALLERHALTYTLAWHRSGEPFYTPEGTLRRVAREVLGAFAGAPPEESTGGGTSDARFIAPLGAQCIEVGPVNASIHQVDEHVRVADLEALPALYRTLVERLLV.

Histidine 67 is a binding site for Zn(2+). Residue aspartate 69 is part of the active site. Aspartate 100 contributes to the Zn(2+) binding site. The active-site Proton acceptor is glutamate 134. Zn(2+)-binding residues include glutamate 135, glutamate 163, and histidine 349.

The protein belongs to the peptidase M20A family. DapE subfamily. As to quaternary structure, homodimer. Requires Zn(2+) as cofactor. It depends on Co(2+) as a cofactor.

The enzyme catalyses N-succinyl-(2S,6S)-2,6-diaminopimelate + H2O = (2S,6S)-2,6-diaminopimelate + succinate. Its pathway is amino-acid biosynthesis; L-lysine biosynthesis via DAP pathway; LL-2,6-diaminopimelate from (S)-tetrahydrodipicolinate (succinylase route): step 3/3. In terms of biological role, catalyzes the hydrolysis of N-succinyl-L,L-diaminopimelic acid (SDAP), forming succinate and LL-2,6-diaminopimelate (DAP), an intermediate involved in the bacterial biosynthesis of lysine and meso-diaminopimelic acid, an essential component of bacterial cell walls. The protein is Succinyl-diaminopimelate desuccinylase of Xanthomonas campestris pv. campestris (strain B100).